The following is a 420-amino-acid chain: UDP-glucuronic acid decarboxylase 1 (420 aa).

M1 is subject to N-acetylmethionine. The Cytoplasmic segment spans residues 1 to 19; sequence MVSKGLLRLVSSVNRRRMK. The chain crosses the membrane as a helical; Signal-anchor for type II membrane protein span at residues 20-40; the sequence is LLLGIALFAYAASVWGNFVNM. Over 41 to 420 the chain is Lumenal; it reads RSIQENGELK…RVKKGRTRHS (380 aa). T94 is modified (phosphothreonine). NAD(+) contacts are provided by G98, F99, V100, D119, N120, F122, T123, G124, D144, and V145. UDP-alpha-D-glucuronate-binding residues include L149 and Y150. The NAD(+) site is built by L159 and S161. K177 contributes to the UDP-alpha-D-glucuronate binding site. T178 serves as a coordination point for NAD(+). UDP-alpha-D-glucuronate is bound by residues N185, G188, K191, and R192. 3 residues coordinate NAD(+): A200, Y231, and K235. The active-site Proton acceptor is the Y231. The UDP-alpha-D-glucuronate site is built by Y245, Q248, and E249. NAD(+) contacts are provided by T261, H267, and R272. The N-linked (GlcNAc...) asparagine glycan is linked to N316.

Belongs to the NAD(P)-dependent epimerase/dehydratase family. UDP-glucuronic acid decarboxylase subfamily. In terms of assembly, homodimer and homotetramer. Interacts with AKT1. NAD(+) is required as a cofactor.

It is found in the golgi apparatus. The protein localises to the golgi stack membrane. The catalysed reaction is UDP-alpha-D-glucuronate + H(+) = UDP-alpha-D-xylose + CO2. It participates in nucleotide-sugar biosynthesis; UDP-alpha-D-xylose biosynthesis; UDP-alpha-D-xylose from UDP-alpha-D-glucuronate: step 1/1. Functionally, catalyzes the NAD-dependent decarboxylation of UDP-glucuronic acid to UDP-xylose. Necessary for the biosynthesis of the core tetrasaccharide in glycosaminoglycan biosynthesis. This chain is UDP-glucuronic acid decarboxylase 1 (Uxs1), found in Mus musculus (Mouse).